Reading from the N-terminus, the 3177-residue chain is Proliferation marker protein Ki-67 (3177 aa).

Positions 27-76 constitute an FHA domain; sequence CLFGRSIECDIRIQLPVVSKRHCKIEVKEQEAILYNFSSTNPTQVNGVTI. 2 stretches are compositionally biased toward basic and acidic residues: residues 98–107 and 116–126; these read EDGNHEDGSK and LGKEPSRRASR. 2 disordered regions span residues 98 to 442 and 473 to 572; these read EDGN…PGLS and RPEL…ASIS. Phosphoserine is present on residues S125, S128, and S162. 2 stretches are compositionally biased toward polar residues: residues 165–177 and 202–221; these read SDGSKNSVSQDSS and STGSSYREPKSSPTQSLSNS. Residues 235–263 show a composition bias toward basic and acidic residues; that stretch reads MKEELDVKSQKSCRKSEPQPDRAAEESRE. A Glycyl lysine isopeptide (Lys-Gly) (interchain with G-Cter in SUMO2) cross-link involves residue K236. Phosphoserine occurs at positions 250, 276, 277, 286, and 287. Residues 276–286 are compositionally biased toward polar residues; that stretch reads SSGSTPVTAAS. Phosphothreonine occurs at positions 307 and 316. Residues S321, S337, S373, S498, S503, and S588 each carry the phosphoserine modification. The interval 455-618 is positively charged patch (CP); the sequence is KSEGMPMKRR…VKQTQTKVAK (164 aa). One can recognise a PP1-binding domain in the interval 462 to 509; sequence KRRRVSFGGHLRPELFDENLPPNTPLKRGETPTKRKSLGTHSPAVLKT. Residues 614-652 are disordered; it reads TKVAKHVPQKQTSKRQRRPSTPKKPTSNLHNQFTTGHAN. Over residues 616–634 the composition is skewed to basic residues; the sequence is VAKHVPQKQTSKRQRRPST. The segment covering 636–652 has biased composition (polar residues); sequence KKPTSNLHNQFTTGHAN. T701 bears the Phosphothreonine mark. 3 disordered regions span residues 793–815, 835–901, and 956–989; these read LEKKTPVSETEPLKTASSVSKLR, VLAE…LGSQ, and KHSPKTPGKKAQPLEGPAGLKEHFETPNPKDKPI. Over residues 855–864 the composition is skewed to polar residues; sequence DQQVQDNENA. Basic and acidic residues-rich tracts occupy residues 867–882 and 975–989; these read RCKESGELSEGSEKTS and LKEHFETPNPKDKPI. K167R repeat units lie at residues 994–1101, 1108–1216, 1228–1336, 1348–1450, 1461–1569, 1582–1684, 1696–1806, 1817–1925, 1937–2046, 2059–2163, 2175–2284, 2296–2405, 2419–2526, 2537–2639, 2643–2748, and 2762–2870; these read TRVL…FISP, KKIP…FQTP, SAKI…FQTP, SAKM…FQIP, KTKK…FQMP, TMLA…LFQT, KQTR…FQTP, ETTK…FQTP, VKMS…FQTP, SAKM…FQTP, SAKI…VFQT, AKLP…CQAP, KTPK…SFQE, KRIS…PIQT, and TQMP…ITQI. Residues K1013 and K1026 each participate in a glycyl lysine isopeptide (Lys-Gly) (interchain with G-Cter in SUMO2) cross-link. S1062 carries the phosphoserine modification. K1082 participates in a covalent cross-link: Glycyl lysine isopeptide (Lys-Gly) (interchain with G-Cter in SUMO1); alternate. A Glycyl lysine isopeptide (Lys-Gly) (interchain with G-Cter in SUMO2); alternate cross-link involves residue K1082. Disordered stretches follow at residues 1109–1321 and 1334–1410; these read KIPS…IRAQ and QTPA…ENDC. S1114 is subject to Phosphoserine. The span at 1114-1127 shows a compositional bias: polar residues; it reads SPHTQPVRTPASTK. At T1122 the chain carries Phosphothreonine. S1125 carries the post-translational modification Phosphoserine. T1150 carries the post-translational modification Phosphothreonine. S1152 is modified (phosphoserine). T1159 and T1175 each carry phosphothreonine. Position 1189 is a phosphoserine (S1189). A Phosphothreonine modification is found at T1215. S1235 bears the Phosphoserine mark. T1243, T1279, T1295, T1307, and T1315 each carry phosphothreonine. Positions 1308-1317 are enriched in basic residues; it reads GHKRRPRTPK. K1317 is covalently cross-linked (Glycyl lysine isopeptide (Lys-Gly) (interchain with G-Cter in SUMO2)). T1335 bears the Phosphothreonine mark. A compositionally biased stretch (polar residues) spans 1353–1368; it reads LESSQAEPVKTPASTK. S1356 carries the phosphoserine modification. T1363 carries the phosphothreonine modification. S1366 carries the post-translational modification Phosphoserine. Positions 1371-1384 are enriched in basic and acidic residues; the sequence is SKTDLSKVDVREDP. Phosphothreonine is present on residues T1400 and T1416. S1469 carries the phosphoserine modification. A Phosphothreonine modification is found at T1477. Position 1480 is a phosphoserine (S1480). Phosphothreonine is present on T1513. The disordered stretch occupies residues 1526 to 1550; it reads RKPAKRKLDSTAGMPNSKRMRCSSK. A phosphoserine mark is found at S1542 and S1587. K1609 carries the post-translational modification N6-acetyllysine. K1668 is covalently cross-linked (Glycyl lysine isopeptide (Lys-Gly) (interchain with G-Cter in SUMO2)). Phosphothreonine occurs at positions 1684 and 1712. S1734 carries the post-translational modification Phosphoserine. Residues 1749-1797 form a disordered region; it reads IPIGPEDDTENKGVKESTPQTLDSSASRTVSKRQQGAHEERPQFSGDLF. Positions 1765 to 1782 are enriched in polar residues; the sequence is STPQTLDSSASRTVSKRQ. At T1766 the chain carries Phosphothreonine. The residue at position 1779 (S1779) is a Phosphoserine. A Phosphothreonine modification is found at T1805. Residue S1825 is modified to Phosphoserine. Residues T1859, T1868, T1884, and T1924 each carry the phosphothreonine modification. Positions 1925 to 2033 are disordered; it reads PAGASDPVSV…QTPKIRAQPL (109 aa). S1944 bears the Phosphoserine mark. Position 1966 is an N6-acetyllysine (K1966). 3 positions are modified to phosphothreonine: T1989, T2005, and T2025. A Glycyl lysine isopeptide (Lys-Gly) (interchain with G-Cter in SUMO1); alternate cross-link involves residue K2027. K2027 is covalently cross-linked (Glycyl lysine isopeptide (Lys-Gly) (interchain with G-Cter in SUMO2); alternate). At T2045 the chain carries Phosphothreonine. Residues 2047-2112 form a disordered region; that stretch reads AGANDSVTVE…SPGTPAPVQE (66 aa). The span at 2063 to 2078 shows a compositional bias: polar residues; the sequence is LESSQAEPVKTPASTK. S2065 bears the Phosphoserine mark. T2073 is subject to Phosphothreonine. Residues S2076, S2095, and S2103 each carry the phosphoserine modification. A compositionally biased stretch (basic and acidic residues) spans 2088 to 2101; that stretch reads VDVREDPSILEKKT. T2106 and T2122 each carry phosphothreonine. Residues 2124–2343 are disordered; it reads KQKLDFTGNS…PLSKSSCASQ (220 aa). Basic residues predominate over residues 2135 to 2144; sequence GHKRRPRTPK. Position 2162 is a phosphothreonine (T2162). Over residues 2180–2195 the composition is skewed to polar residues; the sequence is LESSQAKPVKTPASTK. Phosphoserine is present on S2182. At T2190 the chain carries Phosphothreonine. S2198 is modified (phosphoserine). T2218 is subject to Phosphothreonine. Residue S2220 is modified to Phosphoserine. 3 positions are modified to phosphothreonine: T2227, T2243, and T2283. S2303 bears the Phosphoserine mark. T2311 and T2348 each carry phosphothreonine. Positions 2378–2390 are enriched in basic residues; that stretch reads RGKRQQRSCKKRS. Positions 2378-2447 are disordered; sequence RGKRQQRSCK…RRQARTGLRK (70 aa). S2390 and S2392 each carry phosphoserine. Residue T2405 is modified to Phosphothreonine. S2423 and S2425 each carry phosphoserine. K2451 is covalently cross-linked (Glycyl lysine isopeptide (Lys-Gly) (interchain with G-Cter in SUMO1)). A phosphoserine mark is found at S2464, S2487, S2545, and S2592. Over residues 2538–2547 the composition is skewed to basic and acidic residues; that stretch reads TPKMPDKSPE. Disordered regions lie at residues 2538 to 2828 and 2879 to 3160; these read TPKM…QVSK and HDTS…DAKT. Positions 2605 to 2622 are enriched in polar residues; that stretch reads VQKQDPSVSLTGRRNQPR. A Phosphoserine modification is found at S2649. 2 stretches are compositionally biased toward basic and acidic residues: residues 2673–2697 and 2704–2714; these read GVKEEPTAQRKQPSRETRNTLKEPV and EEVKKSTKQKI. Residue K2675 forms a Glycyl lysine isopeptide (Lys-Gly) (interchain with G-Cter in SUMO1); alternate linkage. Residue K2675 forms a Glycyl lysine isopeptide (Lys-Gly) (interchain with G-Cter in SUMO2); alternate linkage. Polar residues-rich tracts occupy residues 2764 to 2781 and 2883 to 2892; these read MPCNSLQPEQVDSFQSSP and ILKSTQQQKP. Phosphoserine is present on residues S2768 and S2780. The span at 2907–2923 shows a compositional bias: basic and acidic residues; it reads ASKEDPKEVLVDTRDHA. A Glycyl lysine isopeptide (Lys-Gly) (interchain with G-Cter in SUMO2) cross-link involves residue K2909. K2928 carries the N6-acetyllysine modification. Positions 2959–2971 are enriched in basic and acidic residues; that stretch reads EATDEKPVPEKKR. Residue 2973 to 2980 participates in ATP binding; it reads ASSKRHVS. A Phosphoserine modification is found at S2980. Positions 3008–3018 are enriched in basic and acidic residues; that stretch reads KTEEMEAKREN. T3021 bears the Phosphothreonine mark. The span at 3039–3057 shows a compositional bias: basic and acidic residues; the sequence is PKFDASAENVGIKKNEKTM. The segment covering 3058-3067 has biased composition (polar residues); the sequence is KTASQETELQ. The residue at position 3061 (S3061) is a Phosphoserine. Composition is skewed to basic and acidic residues over residues 3118–3132 and 3140–3160; these read PQEEKGVSGESDVRC and VALDSEPKPRVTRGTKKDAKT.

In terms of assembly, interacts with KIF15. Interacts (via the FHA domain) with NIFK. Interacts with PPP1CC. Component of a complex at least composed of ZNF335, HCFC1, CCAR2, EMSY, MKI67, RBBP5, ASH2L and WDR5; the complex is formed as a result of interactions between components of a nuclear receptor-mediated transcription complex and a histone methylation complex. Interacts with ZNF335. In terms of processing, hyperphosphorylated by CDK1 in mitosis; hyperphosphorylatiom prevents undergoing liquid-liquid phase separation. Dephosphorylated by PPP1CC at the onset of anaphase. Dephosphorylation by protein phosphatase 2A (PP2A) and simultaneous exposure of the positively charged patch (CP) during mitotic exit induce the RNA-dependent formation of a liquid-like condensed phase on the chromosome surface. Post-translationally, ubiquitinated by the APC/C complex after neuronal progenitors exit mitosis during brain development, leading to clearance from constitutive heterochromatin. Mainly present in proliferating cells (at protein level).

It localises to the chromosome. The protein resides in the nucleus. The protein localises to the nucleolus. In terms of biological role, protein that associates with the surface of mitotic chromosomes and acts both as a chromosome repellent during early mitosis and chromosome attractant during late mitosis. Required to maintain individual mitotic chromosomes dispersed in the cytoplasm following nuclear envelope disassembly. During early mitosis, relocalizes from nucleoli to the chromosome surface where it forms extended brush structures that cover a substantial fraction of the chromosome surface. The MKI67 brush structure prevents chromosomes from collapsing into a single chromatin mass by forming a steric and electrostatic charge barrier: the protein has a high net electrical charge and acts as a surfactant, dispersing chromosomes and enabling independent chromosome motility. During mitotic anaphase, the MKI67 brush structure collapses and MKI67 switches from a chromosome repellent to a chromosome attractant to promote chromosome clustering and facilitate the exclusion of large cytoplasmic particles from the future nuclear space. Mechanistically, dephosphorylation during mitotic exit and simultaneous exposure of a conserved basic patch induce the RNA-dependent formation of a liquid-like condensed phase on the chromosome surface, promoting coalescence of neighboring chromosome surfaces and clustering of chromosomes. Binds premature ribosomal RNAs during anaphase; promoting liquid-liquid phase separation. Binds DNA, with a preference for supercoiled DNA and AT-rich DNA. Does not contribute to the internal structure of mitotic chromosomes. May play a role in chromatin organization; it is however unclear whether it plays a direct role in chromatin organization or whether it is an indirect consequence of its function in mitotic chromosome. The sequence is that of Proliferation marker protein Ki-67 from Mus musculus (Mouse).